Consider the following 319-residue polypeptide: Cytochrome c biogenesis protein CcsA (319 aa).

Helical transmembrane passes span Ile9–Leu29, Gly44–Gly64, Leu68–Ile88, Met143–Ile163, Val223–Asn243, Thr257–His271, and Val286–Ile306.

The protein belongs to the CcmF/CycK/Ccl1/NrfE/CcsA family. In terms of assembly, may interact with Ccs1.

It is found in the plastid. The protein resides in the chloroplast thylakoid membrane. Its function is as follows. Required during biogenesis of c-type cytochromes (cytochrome c6 and cytochrome f) at the step of heme attachment. This Agrostis stolonifera (Creeping bentgrass) protein is Cytochrome c biogenesis protein CcsA.